The sequence spans 126 residues: Large ribosomal subunit protein bL17 (126 aa).

Belongs to the bacterial ribosomal protein bL17 family. In terms of assembly, part of the 50S ribosomal subunit. Contacts protein L32.

The protein is Large ribosomal subunit protein bL17 of Aliivibrio fischeri (strain ATCC 700601 / ES114) (Vibrio fischeri).